A 271-amino-acid chain; its full sequence is Tryptophan synthase alpha chain (271 aa).

Active-site proton acceptor residues include glutamate 49 and aspartate 60.

It belongs to the TrpA family. Tetramer of two alpha and two beta chains.

It carries out the reaction (1S,2R)-1-C-(indol-3-yl)glycerol 3-phosphate + L-serine = D-glyceraldehyde 3-phosphate + L-tryptophan + H2O. Its pathway is amino-acid biosynthesis; L-tryptophan biosynthesis; L-tryptophan from chorismate: step 5/5. Its function is as follows. The alpha subunit is responsible for the aldol cleavage of indoleglycerol phosphate to indole and glyceraldehyde 3-phosphate. This Azoarcus sp. (strain BH72) protein is Tryptophan synthase alpha chain.